Reading from the N-terminus, the 249-residue chain is Proteasome subunit alpha type-7 (249 aa).

This sequence belongs to the peptidase T1A family. In terms of assembly, the 26S proteasome consists of a 20S proteasome core and two 19S regulatory subunits. The 20S proteasome core is composed of 28 subunits that are arranged in four stacked rings, resulting in a barrel-shaped structure. The two end rings are each formed by seven alpha subunits, and the two central rings are each formed by seven beta subunits. The catalytic chamber with the active sites is on the inside of the barrel.

It localises to the cytoplasm. The protein resides in the nucleus. In terms of biological role, the proteasome is a multicatalytic proteinase complex which is characterized by its ability to cleave peptides with Arg, Phe, Tyr, Leu, and Glu adjacent to the leaving group at neutral or slightly basic pH. The proteasome has an ATP-dependent proteolytic activity. In Cicer arietinum (Chickpea), this protein is Proteasome subunit alpha type-7 (PAD1).